Here is a 503-residue protein sequence, read N- to C-terminus: uncharacterized protein (503 aa).

Helical transmembrane passes span 20-40, 43-63, 106-126, 138-158, 166-186, 215-235, 249-269, 301-321, 359-379, 405-425, 443-463, and 468-488; these read FIAF…VLTM, LGPF…GVML, VSLT…LSFA, LIGL…ISLF, AILF…ILGI, VIST…LTAI, LLMF…ISGI, YLGI…SLAS, VWAS…VPFL, LAVL…FMIL, GVSF…ITAW, and TFKL…FIHS.

This sequence to M.genitalium MG225.

Its subcellular location is the cell membrane. This is an uncharacterized protein from Mycoplasma pneumoniae (strain ATCC 29342 / M129 / Subtype 1) (Mycoplasmoides pneumoniae).